Reading from the N-terminus, the 196-residue chain is Small ribosomal subunit protein uS5 (196 aa).

One can recognise an S5 DRBM domain in the interval 17–80; that stretch reads FEEKMLFVNR…AVARKNMITV (64 aa). The disordered stretch occupies residues 164–196; that stretch reads GTEVRPSLSSDSPAGRSATTEAGEGVADTGGMQ. Positions 170-183 are enriched in polar residues; it reads SLSSDSPAGRSATT.

It belongs to the universal ribosomal protein uS5 family. In terms of assembly, part of the 30S ribosomal subunit. Contacts proteins S4 and S8.

Functionally, with S4 and S12 plays an important role in translational accuracy. In terms of biological role, located at the back of the 30S subunit body where it stabilizes the conformation of the head with respect to the body. The chain is Small ribosomal subunit protein uS5 from Deinococcus radiodurans (strain ATCC 13939 / DSM 20539 / JCM 16871 / CCUG 27074 / LMG 4051 / NBRC 15346 / NCIMB 9279 / VKM B-1422 / R1).